A 686-amino-acid chain; its full sequence is Amyloid-beta-like protein (686 aa).

Positions 1 to 21 (MTVGKLMIGLLIPILVATVYA) are cleaved as a signal peptide. Residues 22 to 621 (EGSPAGSKRH…VERSASSVFQ (600 aa)) lie on the Extracellular side of the membrane. A GFLD subdomain region spans residues 32 to 125 (EKFIPMVAFS…PYHCIDGEFH (94 aa)). The E1 domain maps to 32-197 (EKFIPMVAFS…TGVEFVCCPN (166 aa)). Intrachain disulfides connect cysteine 42–cysteine 65, cysteine 76–cysteine 119, cysteine 101–cysteine 108, cysteine 135–cysteine 195, cysteine 146–cysteine 182, and cysteine 160–cysteine 194. Asparagine 84 carries an N-linked (GlcNAc...) asparagine glycan. The cuBD subdomain stretch occupies residues 133-197 (HDCQFSHVNS…TGVEFVCCPN (65 aa)). N-linked (GlcNAc...) asparagine glycosylation occurs at asparagine 201. Residues 201–245 (NKTDVQKTKEDEDDDDDEDDAYEDDYSEESDEKDEEEPSSQDPYF) form a disordered region. The span at 211–239 (DEDDDDDEDDAYEDDYSEESDEKDEEEPS) shows a compositional bias: acidic residues. In terms of domain architecture, E2 spans 240-440 (SQDPYFKIAN…KYVRPIAVTY (201 aa)). N-linked (GlcNAc...) asparagine glycosylation occurs at asparagine 249. Residues 252–255 (NEHD) and histidine 382 contribute to the heparin site. A glycan (N-linked (GlcNAc...) asparagine) is linked at asparagine 417. Disordered stretches follow at residues 479–526 (PTTT…DMKK) and 550–585 (KLVE…NIKE). The segment covering 500-516 (SDSEEEADEYYEDEDDE) has biased composition (acidic residues). The segment covering 517–526 (QVKKTPDMKK) has biased composition (basic and acidic residues). The span at 558–567 (TDDEDDDEDS) shows a compositional bias: acidic residues. The chain crosses the membrane as a helical span at residues 622–642 (PYVLASAMFITAICIIAFAIT). Over 643–686 (NARRRRAMRGFIEVDVYTPEERHVAGMQVNGYENPTYSFFDSKA) the chain is Cytoplasmic. The YENPXY motif signature appears at 674 to 679 (YENPTY).

It belongs to the APP family. Interacts (via cytoplasmic domain) with feh-1 (via PID 2 domain). In terms of processing, extracellular region is proteolytically cleaved. In terms of tissue distribution, expressed in the head, pharynx, spermatheca, uterus, vulva, tail and ventral neurons. Specifically expressed in nerve ring interneurons, the ventral cord, socket and amphids in the head, with strong expression in junctional cells, including the pharyngeal intestinal valve and uterine seam junction, and the excretory cell and weak expression in epidermal epithelial cells, including hyp7 cells, vulval cells, rectal valve cells, pharyngeal arcade cells and the tail hypodermis.

Its subcellular location is the membrane. The protein localises to the early endosome. Functionally, required for normal developmental progression throughout all life stages. Specifically required for the molt stage during all larval transitions and morphogenesis. Acts with heterochronic genes, including members of the let-7 family, to regulate larval stage to adult transition. Acts synergistically with acn-1 in let-7 regulated postembryonic cell division of hypodermal seam cells. Acts in multiple pathways to influence daf-12 and daf-16 activity to in turn regulate physiological and reproductive processes such as body size and egg-laying. May play a role in neurotransmission. This Caenorhabditis elegans protein is Amyloid-beta-like protein.